Reading from the N-terminus, the 321-residue chain is Methionyl-tRNA formyltransferase (321 aa).

G111 to P114 serves as a coordination point for (6S)-5,6,7,8-tetrahydrofolate.

It belongs to the Fmt family.

The enzyme catalyses L-methionyl-tRNA(fMet) + (6R)-10-formyltetrahydrofolate = N-formyl-L-methionyl-tRNA(fMet) + (6S)-5,6,7,8-tetrahydrofolate + H(+). In terms of biological role, attaches a formyl group to the free amino group of methionyl-tRNA(fMet). The formyl group appears to play a dual role in the initiator identity of N-formylmethionyl-tRNA by promoting its recognition by IF2 and preventing the misappropriation of this tRNA by the elongation apparatus. The polypeptide is Methionyl-tRNA formyltransferase (Chlamydia pneumoniae (Chlamydophila pneumoniae)).